A 323-amino-acid chain; its full sequence is uncharacterized protein (323 aa).

Residues 1–21 (MGSYYSTESTKSNESNETTNN) form a disordered region. The N-myristoyl glycine; by host moiety is linked to residue Gly-2.

This is an uncharacterized protein from Acanthamoeba polyphaga (Amoeba).